The chain runs to 189 residues: Glucose-6-phosphate isomerase (189 aa).

Residues His88, His90, Glu97, and His136 each contribute to the Fe cation site.

Belongs to the archaeal-type GPI family. Homodimer. It depends on Fe cation as a cofactor.

It localises to the cytoplasm. It catalyses the reaction alpha-D-glucose 6-phosphate = beta-D-fructose 6-phosphate. Its pathway is carbohydrate degradation; glycolysis; D-glyceraldehyde 3-phosphate and glycerone phosphate from D-glucose: step 2/4. With respect to regulation, inhibited by mannose 6-phosphate, fructose 1-phosphate and fructose 1,6-bisphosphate. This is Glucose-6-phosphate isomerase (pgiA) from Pyrococcus furiosus (strain ATCC 43587 / DSM 3638 / JCM 8422 / Vc1).